Here is a 245-residue protein sequence, read N- to C-terminus: MRYKITIEYNGSNFIGWQKQKHSSNSIQEILENAILKFSQQHTTVYVAGRTDAGVHALGQVAHFDLTTNLDTYVVRNAINYHLIPHAIAILSVEKTDDKFHARFSAKKRHYLYKIINRYSPLTIDYNRAWLIHNPLNIENMIQAIEYIKGNHDFSSFRARHCQSKNPIKTIDDLKIIHNNQSINIHISAISFLHHQVRIIVGTLVECGKNNFSPEHIKNILKAKNRSYAGMTAPPYGLYFVKVDY.

Catalysis depends on D52, which acts as the Nucleophile. Y111 provides a ligand contact to substrate.

This sequence belongs to the tRNA pseudouridine synthase TruA family. As to quaternary structure, homodimer.

It catalyses the reaction uridine(38/39/40) in tRNA = pseudouridine(38/39/40) in tRNA. Formation of pseudouridine at positions 38, 39 and 40 in the anticodon stem and loop of transfer RNAs. The chain is tRNA pseudouridine synthase A from Ehrlichia chaffeensis (strain ATCC CRL-10679 / Arkansas).